The chain runs to 375 residues: MRGAKSVIDLHAIAHNYNVAKQMMLQKNPSGHVLAIVKANAYGHGAVQVARFLLKHCSSIDGFGVSSIEEALELRHGGIYNKIVLLEGFFTEEDELKLIDDYNFSIIIHSEDQVNSFIKYPFNRPVEIWLKLDSGMNRLGFTPSQFMKFYNLLSNNKNVSNIGKITHFAFADMLENPEHTLKQWDIFEKSVAHLPGPLSAGGSAIILGWLNTVCTDWLRAGIMLYGISPFLSKNKDSKTPESVNIKPAMKLVSTIISVKHVDKGQPIGYGGRYVATRDMKLGVVAMGYGDGFPRQVKDGCPVLVNGVKAPIVGRVSMDMLTVDLSDIPDVKPGDEVIFWGTPELTVADIAKYCSDTSPYELVTKLTRRVPLQYTY.

The Proton acceptor; specific for D-alanine role is filled by Lys-38. The residue at position 38 (Lys-38) is an N6-(pyridoxal phosphate)lysine. The active-site Proton acceptor; specific for L-alanine is the Tyr-269.

This sequence belongs to the alanine racemase family. Requires pyridoxal 5'-phosphate as cofactor.

The enzyme catalyses L-alanine = D-alanine. It functions in the pathway amino-acid biosynthesis; D-alanine biosynthesis; D-alanine from L-alanine: step 1/1. The polypeptide is Alanine racemase, catabolic (alr1) (Schizosaccharomyces pombe (strain 972 / ATCC 24843) (Fission yeast)).